Consider the following 301-residue polypeptide: Probable cyclic nucleotide phosphodiesterase RER_40650 (301 aa).

Fe cation contacts are provided by aspartate 20, histidine 22, aspartate 61, asparagine 95, histidine 167, histidine 205, and histidine 207. Residues histidine 22, aspartate 61, and 95 to 96 contribute to the AMP site; that span reads NH. Histidine 207 provides a ligand contact to AMP.

Belongs to the cyclic nucleotide phosphodiesterase class-III family. Fe(2+) is required as a cofactor.

In Rhodococcus erythropolis (strain PR4 / NBRC 100887), this protein is Probable cyclic nucleotide phosphodiesterase RER_40650.